We begin with the raw amino-acid sequence, 59 residues long: Cecropin-A (59 aa).

The N-terminal stretch at 1-23 (MNFTKLFLLIAMAVLLLTGQSEA) is a signal peptide. A propeptide spans 58-59 (GK) (removed in mature form (AeaeCec2)).

As to expression, hemolymph (at protein level).

Its subcellular location is the secreted. In terms of biological role, antimicrobial peptide. Antibacterial activity against Gram-negative bacteria E.coli D22 and D31, E.carotovora, K.pneumoniae, P.aeruginosa, S.typhimurium, E.cloacae B12 and X.campestris and Gram-positive bacteria A.viridans, M.luteus, B.megaterium and S.pyogenes. Possesses antifungal activity against F.oxysporum, F.culmorum and N.crassa, C.albicans, C.neoformans and S.cerevisiae. No activity against Gram-negative S.marcescens Db11, Gram-positive B.cereus, B.subtilis, B.thuringiensis, S.aureus and L.monocytogenes, the fungi A.fumigatus and B.bassiana and C.glabrata. Partially neutralizes lipopolysaccharides (LPS). Exhibits anti-inflammatory properties: inhibits LPS-induced iNOS/NOS2 transcription, nitric oxide (NO) and pro-inflammatory cytokine production in mouse macrophages and human peripheral blood mononuclear cells (PBMCs); inhibits LPS-induced activation of MAPK and NF-kappa-B signaling pathways in mouse macrophages. This is Cecropin-A (CECA) from Aedes aegypti (Yellowfever mosquito).